The chain runs to 443 residues: Carbohydrate sulfotransferase 9 (443 aa).

The Cytoplasmic portion of the chain corresponds to 1 to 12; it reads MQPSEMVMNPKQ. A helical; Signal-anchor for type II membrane protein membrane pass occupies residues 13-33; sequence VFLSVLIFGVAGLLLFMYLQV. Residues 34-443 are Lumenal-facing; sequence WIEEQHTGRV…LMFNYTTPFL (410 aa). Residues 108–128 show a composition bias toward polar residues; the sequence is LTKTSHSQGGDQALSKSTGSP. Residues 108–132 form a disordered region; that stretch reads LTKTSHSQGGDQALSKSTGSPTEKL. N-linked (GlcNAc...) asparagine glycosylation occurs at Asn159. 220–226 is a 3'-phosphoadenylyl sulfate binding site; the sequence is PKAGCSN. Asn243 carries an N-linked (GlcNAc...) asparagine glycan. 280 to 288 serves as a coordination point for 3'-phosphoadenylyl sulfate; it reads RDPMERLVS. Residues Asn324 and Asn437 are each glycosylated (N-linked (GlcNAc...) asparagine).

Belongs to the sulfotransferase 2 family. Highly expressed in trachea. Also expressed in fetal lung, adult pancreas, testis and salivary gland. Expressed at low level in pituitary gland, apex of the heart, adult lung, prostate and mammary gland. Weakly or not expressed in heart, liver and spinal cord.

Its subcellular location is the golgi apparatus membrane. The protein localises to the secreted. Catalyzes the transfer of sulfate to position 4 of non-reducing N-acetylgalactosamine (GalNAc) residues in both N-glycans and O-glycans. Participates in biosynthesis of glycoprotein hormones lutropin and thyrotropin, by mediating sulfation of their carbohydrate structures. Has a higher activity toward carbonic anhydrase VI than toward lutropin. Only active against terminal GalNAcbeta1,GalNAcbeta. Isoform 2, but not isoform 1, is active toward chondroitin. This is Carbohydrate sulfotransferase 9 (CHST9) from Homo sapiens (Human).